The chain runs to 389 residues: snRNA-activating protein complex subunit 1 (389 aa).

Low complexity predominate over residues 1–15 (MGTPAGAGTRPTGAG). Disordered regions lie at residues 1-22 (MGTPAGAGTRPTGAGTVEGVGI), 245-276 (WHKERKNPSLKPKLKDGEENGEGSSEEPERCE), and 290-389 (SAVV…KRKC). Residues 20–187 (VGIPPGLQTD…QKFKDPNDRV (168 aa)) are SNAPC3-binding. The segment at 183–287 (PNDRVMKLIT…AVSLAKIKAK (105 aa)) is SNAPC4-binding. The span at 245–262 (WHKERKNPSLKPKLKDGE) shows a compositional bias: basic and acidic residues. Phosphoserine occurs at positions 308 and 309.

In terms of assembly, part of the SNAPc complex composed of 5 subunits: SNAPC1, SNAPC2, SNAPC3, SNAPC4 and SNAPC5. SNAPC1 interacts with SNAPC3, SNAPC4 and TBP.

Its subcellular location is the nucleus. Its function is as follows. Part of the SNAPc complex required for the transcription of both RNA polymerase II and III small-nuclear RNA genes. Binds to the proximal sequence element (PSE), a non-TATA-box basal promoter element common to these 2 types of genes. Recruits TBP and BRF2 to the U6 snRNA TATA box. The polypeptide is snRNA-activating protein complex subunit 1 (Snapc1) (Mus musculus (Mouse)).